The following is a 602-amino-acid chain: Elongation factor 4 (602 aa).

The tr-type G domain maps to 7 to 196 (SKIRNFCIIA…HPQNEIKSPT (190 aa)). Residues 19–24 (DHGKST) and 136–139 (NKVD) each bind GTP.

Belongs to the TRAFAC class translation factor GTPase superfamily. Classic translation factor GTPase family. LepA subfamily.

It is found in the cell inner membrane. The catalysed reaction is GTP + H2O = GDP + phosphate + H(+). Its function is as follows. Required for accurate and efficient protein synthesis under certain stress conditions. May act as a fidelity factor of the translation reaction, by catalyzing a one-codon backward translocation of tRNAs on improperly translocated ribosomes. Back-translocation proceeds from a post-translocation (POST) complex to a pre-translocation (PRE) complex, thus giving elongation factor G a second chance to translocate the tRNAs correctly. Binds to ribosomes in a GTP-dependent manner. This chain is Elongation factor 4, found in Prochlorococcus marinus (strain MIT 9515).